The sequence spans 585 residues: Protein FAM151A (585 aa).

Residues 14–34 (WVFAGITCVSVVVIAAIVLAI) traverse the membrane as a helical segment.

This sequence belongs to the menorin family.

It is found in the membrane. The sequence is that of Protein FAM151A (FAM151A) from Homo sapiens (Human).